Here is a 297-residue protein sequence, read N- to C-terminus: Ribosomal protein L11 methyltransferase (297 aa).

S-adenosyl-L-methionine-binding residues include Thr152, Gly173, Asp195, and Asn234.

It belongs to the methyltransferase superfamily. PrmA family.

Its subcellular location is the cytoplasm. It catalyses the reaction L-lysyl-[protein] + 3 S-adenosyl-L-methionine = N(6),N(6),N(6)-trimethyl-L-lysyl-[protein] + 3 S-adenosyl-L-homocysteine + 3 H(+). Functionally, methylates ribosomal protein L11. In Cupriavidus pinatubonensis (strain JMP 134 / LMG 1197) (Cupriavidus necator (strain JMP 134)), this protein is Ribosomal protein L11 methyltransferase.